The following is a 363-amino-acid chain: Phospho-N-acetylmuramoyl-pentapeptide-transferase (363 aa).

10 helical membrane passes run 15–33 (FTTL…SFIF), 82–102 (NTPT…LLIV), 106–126 (FYSM…IIGF), 147–167 (FILQ…NGYI), 183–203 (IVIF…VNLT), 207–227 (DGLA…EIFI), 233–253 (LIIY…FLKF), 260–280 (IFMG…ISIL), 285–305 (FTLF…IIQV), and 341–361 (IVEN…VLKI).

The protein belongs to the glycosyltransferase 4 family. MraY subfamily. Mg(2+) is required as a cofactor.

It is found in the cell inner membrane. It carries out the reaction UDP-N-acetyl-alpha-D-muramoyl-L-alanyl-gamma-D-glutamyl-meso-2,6-diaminopimeloyl-D-alanyl-D-alanine + di-trans,octa-cis-undecaprenyl phosphate = di-trans,octa-cis-undecaprenyl diphospho-N-acetyl-alpha-D-muramoyl-L-alanyl-D-glutamyl-meso-2,6-diaminopimeloyl-D-alanyl-D-alanine + UMP. Its pathway is cell wall biogenesis; peptidoglycan biosynthesis. In terms of biological role, catalyzes the initial step of the lipid cycle reactions in the biosynthesis of the cell wall peptidoglycan: transfers peptidoglycan precursor phospho-MurNAc-pentapeptide from UDP-MurNAc-pentapeptide onto the lipid carrier undecaprenyl phosphate, yielding undecaprenyl-pyrophosphoryl-MurNAc-pentapeptide, known as lipid I. This Prochlorococcus marinus (strain MIT 9515) protein is Phospho-N-acetylmuramoyl-pentapeptide-transferase.